We begin with the raw amino-acid sequence, 239 residues long: Small ribosomal subunit protein uS2 (239 aa).

This sequence belongs to the universal ribosomal protein uS2 family.

The protein is Small ribosomal subunit protein uS2 of Francisella tularensis subsp. holarctica (strain FTNF002-00 / FTA).